Consider the following 170-residue polypeptide: Transcriptional repressor NrdR (170 aa).

The segment at Cys3–Cys34 is a zinc-finger region. An ATP-cone domain is found at Leu46 to Asp136. A disordered region spans residues Arg148–Asp170.

Belongs to the NrdR family. Zn(2+) serves as cofactor.

In terms of biological role, negatively regulates transcription of bacterial ribonucleotide reductase nrd genes and operons by binding to NrdR-boxes. The sequence is that of Transcriptional repressor NrdR from Streptomyces griseus subsp. griseus (strain JCM 4626 / CBS 651.72 / NBRC 13350 / KCC S-0626 / ISP 5235).